A 984-amino-acid polypeptide reads, in one-letter code: PAX-interacting protein 1 (984 aa).

BRCT domains are found at residues 8–93 and 94–183; these read VPEE…GFSP and ESCQ…LYHP. Residues 94–183 are interaction with PAGR1; that stretch reads ESCQIFFGIT…TRKDEALYHP (90 aa). 2 disordered regions span residues 187 to 271 and 417 to 509; these read VYEE…PAEV and QQHL…LFGH. A compositionally biased stretch (acidic residues) spans 188 to 208; the sequence is YEEEEEEEEEEEGAGNEEPDS. Low complexity predominate over residues 217-229; the sequence is KSSPASSQEGSPS. Phosphoserine is present on residues serine 227 and serine 235. Residues 424 to 454 are compositionally biased toward pro residues; it reads PYPPPPPHPFPPPPAHPHQFPQPPLQRPQPP. Residues 455 to 485 show a composition bias toward low complexity; it reads LQQQQLSHLQQQQLQHLQRLQQMQPTPTAQL. Residues 486 to 499 show a composition bias toward pro residues; that stretch reads PGPPAQALQPPPPQ. The tract at residues 505–984 is interaction with TP53BP1; it reads PLFGHDPAVE…TLDYESYKFN (480 aa). 2 consecutive BRCT domains span residues 516 to 609 and 616 to 704; these read PEEG…RALH and PGGK…TQYG. The Nuclear localization signal motif lies at 583-600; that stretch reads RKRCITAHWLNTVLKKKK. Positions 750–771 are disordered; the sequence is KQNEVTNVQPSSKRARIEDIPP. The segment covering 752-761 has biased composition (polar residues); that stretch reads NEVTNVQPSS. BRCT domains are found at residues 781–862 and 883–924; these read TPFV…NYLL and HASP…QPSF.

As to quaternary structure, interacts with the C-terminal transactivation domain of PAX2. Forms a constitutive complex with PAGR1 independently of the MLL2/MLL3 complex. Interacts with TP53BP1 (when phosphorylated at the N-terminus by ATM). Interacts with HLTF. Component of the KMT2 family MLL2/MLL3 complex (also named ASCOM complex), at least composed of the HMTs KMT2D and/or KMT2C, the common subunits ASH2L, RBBP5, WDR5 and DPY30, and the complex type-specific subunits PAXIP1/PTIP, PAGR1, NCOA6 and KDM6A; required for the association of PAGR1 with the MLL2/MLL3 complex. Interacts with NUPR1; this interaction prevents PAXIP1 inhibition of PAX2 transcription factor activity.

The protein localises to the nucleus matrix. The protein resides in the chromosome. Involved in DNA damage response and in transcriptional regulation through histone methyltransferase (HMT) complexes. Plays a role in early development. In DNA damage response is required for cell survival after ionizing radiation. In vitro shown to be involved in the homologous recombination mechanism for the repair of double-strand breaks (DSBs). Its localization to DNA damage foci requires RNF8 and UBE2N. Recruits TP53BP1 to DNA damage foci and, at least in particular repair processes, effective DNA damage response appears to require the association with TP53BP1 phosphorylated by ATM at 'Ser-25'. Together with TP53BP1 regulates ATM association. Proposed to recruit PAGR1 to sites of DNA damage and the PAGR1:PAXIP1 complex is required for cell survival in response to DNA damage; the function is probably independent of MLL-containing histone methyltransferase (HMT) complexes. However, this function has been questioned. Promotes ubiquitination of PCNA following UV irradiation and may regulate recruitment of polymerase eta and RAD51 to chromatin after DNA damage. Proposed to be involved in transcriptional regulation by linking MLL-containing histone methyltransferase (HMT) complexes to gene promoters by interacting with promoter-bound transcription factors such as PAX2. Associates with gene promoters that are known to be regulated by KMT2D/MLL2. During immunoglobulin class switching in activated B-cells is involved in trimethylation of histone H3 at 'Lys-4' and in transcription initiation of downstream switch regions at the immunoglobulin heavy-chain (Igh) locus; this function appears to involve the recruitment of MLL-containing HMT complexes. Conflictingly, its function in transcriptional regulation during immunoglobulin class switching is reported to be independent of the MLL2/MLL3 complex. This chain is PAX-interacting protein 1 (PAXIP1), found in Bos taurus (Bovine).